The following is a 492-amino-acid chain: Solute carrier family 2, facilitated glucose transporter member 1 (492 aa).

M1 carries the post-translational modification N-acetylmethionine. Residues 1–11 lie on the Cytoplasmic side of the membrane; the sequence is MEPSSKKLTGR. A helical transmembrane segment spans residues 12–33; sequence LMLAVGGAVLGSLQFGYNTGVI. Residues 34 to 66 lie on the Extracellular side of the membrane; that stretch reads NAPQKVIEEFYNQTWVHRYGESILPTTLTTLWS. A glycan (N-linked (GlcNAc...) asparagine) is linked at N45. A helical membrane pass occupies residues 67 to 87; sequence LSVAIFSVGGMIGSFSVGLFV. The Cytoplasmic portion of the chain corresponds to 88–90; sequence NRF. A helical membrane pass occupies residues 91-112; the sequence is GRRNSMLMMNLLAFVSAVLMGF. Topologically, residues 113-120 are extracellular; that stretch reads SKLGKSFE. The chain crosses the membrane as a helical span at residues 121–144; the sequence is MLILGRFIIGVYCGLTTGFVPMYV. A cytochalasin B-binding site is contributed by T137. The Cytoplasmic segment spans residues 145–155; it reads GEVSPTALRGA. The helical transmembrane segment at 156–176 threads the bilayer; sequence LGTLHQLGIVVGILIAQVFGL. Residues 177 to 185 are Extracellular-facing; that stretch reads DSIMGNKDL. The helical transmembrane segment at 186-206 threads the bilayer; it reads WPLLLSIIFIPALLQCIVLPF. Residues 207-271 lie on the Cytoplasmic side of the membrane; the sequence is CPESPRFLLI…LFRSPAYRQP (65 aa). Residue S226 is modified to Phosphoserine; by PKC/PRKCB. A helical membrane pass occupies residues 272 to 293; the sequence is ILIAVVLQLSQQLSGINAVFYY. Q282 is a binding site for cytochalasin B. Residues 282–283 and N288 each bind D-glucose; that span reads QQ. Topologically, residues 294–306 are extracellular; sequence STSIFEKAGVQQP. A helical transmembrane segment spans residues 307–328; it reads VYATIGSGIVNTAFTVVSLFVV. A D-glucose-binding site is contributed by N317. At 329-334 the chain is on the cytoplasmic side; the sequence is ERAGRR. Residues 335-355 traverse the membrane as a helical segment; that stretch reads TLHLIGLAGMAGCAILMTIAL. The Extracellular portion of the chain corresponds to 356–365; sequence ALLEQLPWMS. The helical transmembrane segment at 366–388 threads the bilayer; sequence YLSIVAIFGFVAFFEVGPGPIPW. E380 contributes to the D-glucose binding site. W388 is a cytochalasin B binding site. The Cytoplasmic portion of the chain corresponds to 389–401; it reads FIVAELFSQGPRP. Residues 402–422 traverse the membrane as a helical segment; that stretch reads AAIAVAGFSNWTSNFIVGMCF. N411 contributes to the cytochalasin B binding site. Residues 423-429 lie on the Extracellular side of the membrane; the sequence is QYVEQLC. The chain crosses the membrane as a helical span at residues 430–450; sequence GPYVFIIFTVLLVLFFIFTYF. Over 451 to 492 the chain is Cytoplasmic; it reads KVPETKGRTFDEIASGFRQGGASQSDKTPEELFHPLGADSQV. Position 465 is a phosphoserine (S465). The tract at residues 468–492 is disordered; the sequence is RQGGASQSDKTPEELFHPLGADSQV. T478 carries the phosphothreonine modification. At S490 the chain carries Phosphoserine.

Belongs to the major facilitator superfamily. Sugar transporter (TC 2.A.1.1) family. Glucose transporter subfamily. As to quaternary structure, interacts with GIPC (via PDZ domain). Found in a complex with ADD2, DMTN and SLC2A1. Interacts (via C-terminus cytoplasmic region) with DMTN isoform 2. Interacts with SNX27; the interaction is required when endocytosed to prevent degradation in lysosomes and promote recycling to the plasma membrane. Interacts with STOM. Interacts with SGTA (via Gln-rich region). Interacts with isoform 1 of BSG. Post-translationally, phosphorylation at Ser-226 by PKC promotes glucose uptake by increasing cell membrane localization. As to expression, detected in erythrocytes (at protein level). Expressed at variable levels in many human tissues.

Its subcellular location is the cell membrane. The protein resides in the melanosome. It is found in the photoreceptor inner segment. It carries out the reaction D-glucose(out) = D-glucose(in). It participates in carbohydrate degradation. The uptake of glucose is inhibited by cytochalasin B and Phe-amide core-scaffold inhibitors GLUT-i1 and GLUT-i2. These inhibitors bind in the central cavity of the inward-open state and overlap the glucose-binding site. Glucose uptake is increased in response to phorbol ester 12-O-tetradecanoylphorbol-13-acetate (TPA) treatment: TPA-induced glucose uptake requires phosphorylation at Ser-226. Interacts with SMIM43; the interaction may promote SLC2A1-mediated glucose transport to meet the energy needs of mesendoderm differentiation. Its function is as follows. Facilitative glucose transporter, which is responsible for constitutive or basal glucose uptake. Has a very broad substrate specificity; can transport a wide range of aldoses including both pentoses and hexoses. Most important energy carrier of the brain: present at the blood-brain barrier and assures the energy-independent, facilitative transport of glucose into the brain. In association with BSG and NXNL1, promotes retinal cone survival by increasing glucose uptake into photoreceptors. Required for mesendoderm differentiation. The chain is Solute carrier family 2, facilitated glucose transporter member 1 from Homo sapiens (Human).